Here is a 702-residue protein sequence, read N- to C-terminus: Methionine--tRNA ligase (702 aa).

A 'HIGH' region motif is present at residues 23 to 33 (PYANGPLHLGH). Cysteine 154, cysteine 157, cysteine 167, and cysteine 170 together coordinate Zn(2+). The 'KMSKS' region signature appears at 341–345 (KMSKS). Lysine 344 contributes to the ATP binding site. Residues 562-593 (LAPPPASAKQQNASMSNTAPPPTAEEPETTAP) are disordered. Residues 569 to 578 (AKQQNASMSN) show a composition bias toward polar residues. Residues 599-702 (DFAKLDLRIG…SSAQPGMPVR (104 aa)) form the tRNA-binding domain.

Belongs to the class-I aminoacyl-tRNA synthetase family. MetG type 1 subfamily. As to quaternary structure, homodimer. Zn(2+) serves as cofactor.

It localises to the cytoplasm. The catalysed reaction is tRNA(Met) + L-methionine + ATP = L-methionyl-tRNA(Met) + AMP + diphosphate. Its function is as follows. Is required not only for elongation of protein synthesis but also for the initiation of all mRNA translation through initiator tRNA(fMet) aminoacylation. The chain is Methionine--tRNA ligase from Xylella fastidiosa (strain M23).